The chain runs to 729 residues: MSESEEISEFGYIMELLAKGKVTIKNIEKELICPACKELFTHPLILPCQHSVCHKCVKELLLSLDDSFNDVASDSSNQSSPRLRLTSPSMDKIDKINRPGWKRNSLTPRPTTFPCPGCEHDVDLGERGVSGLFRNFTLETIVERYRQAARAATAIMCDLCKPPPQESTKSCMDCSASYCNECFKIYHPWGTVKAQHEYVGPTTNFRPKVLMCPEHETERINMYCELCRRPVCHLCKLGGNHSNHRVTTMSSAYKTLKEKLSKDIDFLIGKESQVKSQISELNLLMKETECNGERAKEEALAHFEKLFEILEDRKSSVLKAIDASKKLRLDKFHTQMEEYQGLLENNGLVGYAQEVLKETDQSCFVQTAKQLHLRIQKATESLKSFRPAAQASFEDYVVNISKQTEVLGELSFFSSGIDIPEINEEQSKVYNNALIDWHHPEKDKADSYVLEYRKINRDEEMISWNEIEVHGTSKVVSNLESNSPYAFRVRAYRGSICSPCSRELILHTPPAPVFSFLFDEKCGYNTEHLLLNLKRDRVESRAGFNVLLAAERIQVGHYTSLDYIIGDVGVTKGKHFWACRVEPYSYLVKVGVASSDKLQEWLRSPRDAASPRYEQDSGHDSGSEDACFDSSQPFTLVTIGMKKFFIPKSPTSSNEPENRVLPMPTSIGIFLDCDKGKVSFYDMDHMKCLYERQVDCSHTMYPAFALMGSGGIQLEEAITAKYLEYEEDV.

Residues 33 to 84 (CPACKELFTHPLILPCQHSVCHKCVKELLLSLDDSFNDVASDSSNQSSPRLR) form an RING-type; degenerate zinc finger. B box-type zinc fingers lie at residues 154–192 (AIMC…WGTV) and 207–249 (PKVL…VTTM). Positions 212, 215, 235, and 241 each coordinate Zn(2+). The stretch at 271–302 (ESQVKSQISELNLLMKETECNGERAKEEALAH) forms a coiled coil. Positions 356–413 (LKETDQSCFVQTAKQLHLRIQKATESLKSFRPAAQASFEDYVVNISKQTEVLGELSFF) constitute a COS domain. Positions 416 to 511 (GIDIPEINEE…RELILHTPPA (96 aa)) constitute a Fibronectin type-III domain. The B30.2/SPRY domain maps to 509 to 723 (PPAPVFSFLF…LEEAITAKYL (215 aa)). Residues 606–626 (RDAASPRYEQDSGHDSGSEDA) form a disordered region. The span at 613 to 622 (YEQDSGHDSG) shows a compositional bias: basic and acidic residues.

The protein belongs to the TRIM/RBCC family. As to quaternary structure, interacts with CENPH. Expressed in testis. Strongly expressed in the neural tube region in 14.5 dpc embryos.

The protein resides in the cytoplasm. Its subcellular location is the cytoplasmic vesicle. It localises to the secretory vesicle. It is found in the acrosome. The protein localises to the cytoskeleton. It carries out the reaction S-ubiquitinyl-[E2 ubiquitin-conjugating enzyme]-L-cysteine + [acceptor protein]-L-lysine = [E2 ubiquitin-conjugating enzyme]-L-cysteine + N(6)-ubiquitinyl-[acceptor protein]-L-lysine.. In terms of biological role, E3 ubiquitin-protein ligase which mediates ubiquitination and subsequent proteasomal degradation of target proteins. Involved in chromosome segregation and cell cycle regulation. May play a role in the acrosome reaction and fertilization. This is E3 ubiquitin-protein ligase Trim36 (Trim36) from Mus musculus (Mouse).